The sequence spans 576 residues: 2-isopropylmalate synthase (576 aa).

One can recognise a Pyruvate carboxyltransferase domain in the interval 31 to 305; sequence PIWMSTDLRD…DPGLDFSHVN (275 aa). Residues Asp-40, His-244, His-246, and Asn-280 each coordinate Mg(2+). Residues 437–576 form a regulatory domain region; sequence ADGPIGYVSH…RGMAPSMELA (140 aa).

Belongs to the alpha-IPM synthase/homocitrate synthase family. LeuA type 2 subfamily. In terms of assembly, homodimer. The cofactor is Mg(2+).

Its subcellular location is the cytoplasm. The catalysed reaction is 3-methyl-2-oxobutanoate + acetyl-CoA + H2O = (2S)-2-isopropylmalate + CoA + H(+). The protein operates within amino-acid biosynthesis; L-leucine biosynthesis; L-leucine from 3-methyl-2-oxobutanoate: step 1/4. Functionally, catalyzes the condensation of the acetyl group of acetyl-CoA with 3-methyl-2-oxobutanoate (2-ketoisovalerate) to form 3-carboxy-3-hydroxy-4-methylpentanoate (2-isopropylmalate). The protein is 2-isopropylmalate synthase of Ralstonia nicotianae (strain ATCC BAA-1114 / GMI1000) (Ralstonia solanacearum).